A 135-amino-acid chain; its full sequence is Meiotically up-regulated gene 116 protein (135 aa).

A helical transmembrane segment spans residues 20–39; the sequence is YFHSFHCFFLLCFTVMLCVV. Positions 81 to 101 are disordered; it reads QTPTKKGNKTKKKRKKEKKKE. Residues 86 to 98 are compositionally biased toward basic residues; the sequence is KGNKTKKKRKKEK.

It localises to the mitochondrion membrane. Has a role in meiosis. The protein is Meiotically up-regulated gene 116 protein (mug116) of Schizosaccharomyces pombe (strain 972 / ATCC 24843) (Fission yeast).